A 317-amino-acid polypeptide reads, in one-letter code: Pseudouridine-5'-phosphate glycosidase 1 (317 aa).

The active-site Proton donor is glutamate 40. Lysine 101 and valine 121 together coordinate substrate. Residue aspartate 153 coordinates Mn(2+). 155–157 (SAD) is a substrate binding site. Lysine 174 functions as the Nucleophile in the catalytic mechanism.

It belongs to the pseudouridine-5'-phosphate glycosidase family. Homotrimer. Mn(2+) is required as a cofactor.

The catalysed reaction is D-ribose 5-phosphate + uracil = psi-UMP + H2O. Functionally, catalyzes the reversible cleavage of pseudouridine 5'-phosphate (PsiMP) to ribose 5-phosphate and uracil. Functions biologically in the cleavage direction, as part of a pseudouridine degradation pathway. The chain is Pseudouridine-5'-phosphate glycosidase 1 from Rhizobium johnstonii (strain DSM 114642 / LMG 32736 / 3841) (Rhizobium leguminosarum bv. viciae).